The following is a 942-amino-acid chain: UvrABC system protein A (942 aa).

An ATP-binding site is contributed by 32–39; that stretch reads GLSGSGKS. The segment at 251-278 adopts a C4-type zinc-finger fold; that stretch reads CPVCGFTVPELEPRLFSFNAPFGSCPTC. 2 ABC transporter domains span residues 308–589 and 609–937; these read WNPI…KKSI and GNGR…HYLK. An ATP-binding site is contributed by 641–648; sequence GVSGSGKS. The C4-type zinc-finger motif lies at 740 to 766; it reads CEACSGDGIIKIEMHFLPDVYVPCEVC.

It belongs to the ABC transporter superfamily. UvrA family. Forms a heterotetramer with UvrB during the search for lesions.

Its subcellular location is the cytoplasm. In terms of biological role, the UvrABC repair system catalyzes the recognition and processing of DNA lesions. UvrA is an ATPase and a DNA-binding protein. A damage recognition complex composed of 2 UvrA and 2 UvrB subunits scans DNA for abnormalities. When the presence of a lesion has been verified by UvrB, the UvrA molecules dissociate. The protein is UvrABC system protein A of Streptococcus pyogenes serotype M18 (strain MGAS8232).